Consider the following 659-residue polypeptide: DNA helicase/primase complex-associated protein (659 aa).

This sequence belongs to the herpesviridae HEPA family. Associates with the primase and the helicase to form the helicase-primase complex. Interacts with the origin-binding protein. Interacts with the polymerase catalytic subunit.

It localises to the host nucleus. In terms of biological role, component of the helicase/primase complex. Unwinds the DNA at the replication forks and generates single-stranded DNA for both leading and lagging strand synthesis. The primase synthesizes short RNA primers on the lagging strand that the polymerase presumably elongates using dNTPs. The primase-associated factor has no known catalytic activity in the complex and may serve to facilitate the formation of the replisome by directly interacting with the origin-binding protein and the polymerase. This chain is DNA helicase/primase complex-associated protein (U74), found in Human herpesvirus 7 (strain JI) (HHV-7).